Consider the following 172-residue polypeptide: Methylated-DNA--protein-cysteine methyltransferase (172 aa).

The Nucleophile; methyl group acceptor role is filled by C142.

This sequence belongs to the MGMT family.

It is found in the cytoplasm. It catalyses the reaction a 6-O-methyl-2'-deoxyguanosine in DNA + L-cysteinyl-[protein] = S-methyl-L-cysteinyl-[protein] + a 2'-deoxyguanosine in DNA. It carries out the reaction a 4-O-methyl-thymidine in DNA + L-cysteinyl-[protein] = a thymidine in DNA + S-methyl-L-cysteinyl-[protein]. Functionally, involved in the cellular defense against the biological effects of O6-methylguanine (O6-MeG) and O4-methylthymine (O4-MeT) in DNA. Repairs the methylated nucleobase in DNA by stoichiometrically transferring the methyl group to a cysteine residue in the enzyme. This is a suicide reaction: the enzyme is irreversibly inactivated. The protein is Methylated-DNA--protein-cysteine methyltransferase of Pyrococcus abyssi (strain GE5 / Orsay).